Consider the following 398-residue polypeptide: Lysophospholipid transporter LplT (398 aa).

12 helical membrane passes run 19-39 (VIVA…ATLA), 53-73 (VLQM…GQIA), 96-116 (ICLG…AAAY), 139-159 (LMEA…GVLA), 164-184 (IAAL…NLFI), 195-213 (SWQL…VVLW), 227-247 (LFWG…PVAL), 257-277 (YLNA…AKLV), 281-301 (TVSR…MFSL), 304-324 (ALLP…FFVV), 352-372 (NSTM…GVPA), and 373-393 (VATG…LWIW).

The protein belongs to the major facilitator superfamily. LplT (TC 2.A.1.42) family.

Its subcellular location is the cell inner membrane. Functionally, catalyzes the facilitated diffusion of 2-acyl-glycero-3-phosphoethanolamine (2-acyl-GPE) into the cell. This chain is Lysophospholipid transporter LplT, found in Salmonella arizonae (strain ATCC BAA-731 / CDC346-86 / RSK2980).